The following is a 474-amino-acid chain: MAKEISSELLNTILTRVGGPGNIASCGNCMTRLRLGVHDSSLVDPNIKTLEGVKGVILTSDQVQVVFGPGKAHRAAKAMSELLGEAPVQDAAEIAAQNKRQLKAKQTSGVQQFLAKFATIFTPLIPGFIAAGLLLGIATLIATVMHVPADAQGTLPDALNFMKVFSKGLFTFLVILVGYNAAQAFGGTGVNGAIIAALFLLGYNPAATTGYYAGFHDFFGLPIDPRGNIIGVLIAAWACARIEGMVRRFMPDDLDMLLTSLITLLITATLAYLIIMPLGGWLFEGMSWLFMHLNSNPFGCAVLAGLFLIAVVFGVHQGFIPVYLALMDSQGFNSLFPILSMAGAGQVGAALALYWRAQPHSALRSQVRGAIIPGLLGVGEPLIYGVTLPRMKPFVTACLGGAAGGLFIGLIAWWGLPMGLNSAFGPSGLVALPLMTSAQGILPAMAVYAGGILVAWVCGFIFTTLFGCRNVNLD.

Residues 1–89 (MAKEISSELL…SELLGEAPVQ (89 aa)) form the PTS EIIB type-1 domain. Residues 1–123 (MAKEISSELL…LAKFATIFTP (123 aa)) lie on the Cytoplasmic side of the membrane. Cysteine 29 serves as the catalytic Phosphocysteine intermediate; for EIIB activity. The region spanning 115-474 (AKFATIFTPL…LFGCRNVNLD (360 aa)) is the PTS EIIC type-1 domain. The helical transmembrane segment at 124–144 (LIPGFIAAGLLLGIATLIATV) threads the bilayer. Residues 145-157 (MHVPADAQGTLPD) are Periplasmic-facing. Residues 158 to 178 (ALNFMKVFSKGLFTFLVILVG) form a helical membrane-spanning segment. At 179-180 (YN) the chain is on the cytoplasmic side. The chain crosses the membrane as a helical span at residues 181–201 (AAQAFGGTGVNGAIIAALFLL). Residues 202 to 217 (GYNPAATTGYYAGFHD) lie on the Periplasmic side of the membrane. A helical membrane pass occupies residues 218 to 238 (FFGLPIDPRGNIIGVLIAAWA). Topologically, residues 239–260 (CARIEGMVRRFMPDDLDMLLTS) are cytoplasmic. A helical transmembrane segment spans residues 261-281 (LITLLITATLAYLIIMPLGGW). At 282-301 (LFEGMSWLFMHLNSNPFGCA) the chain is on the periplasmic side. The chain crosses the membrane as a helical span at residues 302–322 (VLAGLFLIAVVFGVHQGFIPV). Residues 323–334 (YLALMDSQGFNS) are Cytoplasmic-facing. The helical transmembrane segment at 335–355 (LFPILSMAGAGQVGAALALYW) threads the bilayer. Residues 356-368 (RAQPHSALRSQVR) lie on the Periplasmic side of the membrane. Residues 369–389 (GAIIPGLLGVGEPLIYGVTLP) form a helical membrane-spanning segment. The Cytoplasmic segment spans residues 390–393 (RMKP). The helical transmembrane segment at 394 to 414 (FVTACLGGAAGGLFIGLIAWW) threads the bilayer. At 415–440 (GLPMGLNSAFGPSGLVALPLMTSAQG) the chain is on the periplasmic side. A helical membrane pass occupies residues 441-461 (ILPAMAVYAGGILVAWVCGFI). Residues 462 to 474 (FTTLFGCRNVNLD) are Cytoplasmic-facing.

Its subcellular location is the cell inner membrane. It carries out the reaction N-acetyl-beta-D-muramate(out) + N(pros)-phospho-L-histidyl-[protein] = N-acetyl-beta-D-muramate 6-phosphate(in) + L-histidyl-[protein]. The phosphoenolpyruvate-dependent sugar phosphotransferase system (sugar PTS), a major carbohydrate active transport system, catalyzes the phosphorylation of incoming sugar substrates concomitantly with their translocation across the cell membrane. This system is involved in N-acetylmuramic acid (MurNAc) transport, yielding cytoplasmic MurNAc-6-P. Is responsible for growth on MurNAc as the sole source of carbon and energy. Is also able to take up anhydro-N-acetylmuramic acid (anhMurNAc), but cannot phosphorylate the carbon 6, probably because of the 1,6-anhydro ring. The chain is PTS system N-acetylmuramic acid-specific EIIBC component (murP) from Escherichia coli (strain K12).